The following is a 601-amino-acid chain: DNA ligase (601 aa).

D258 provides a ligand contact to ATP. Residue K260 is the N6-AMP-lysine intermediate of the active site. R265, R280, E310, F350, R427, and K433 together coordinate ATP.

Belongs to the ATP-dependent DNA ligase family. In terms of assembly, interacts with the PCNA heterotrimer, probably via subunit PCNA3. A divalent metal cation serves as cofactor.

The catalysed reaction is ATP + (deoxyribonucleotide)n-3'-hydroxyl + 5'-phospho-(deoxyribonucleotide)m = (deoxyribonucleotide)n+m + AMP + diphosphate.. Ligase activity stimulated by PCNA heterotrimer. In terms of biological role, DNA ligase that seals nicks in double-stranded DNA during DNA replication, DNA recombination and DNA repair. Interaction with PCNA enhances ligase activity. DNA polymerase I, DNA ligase and the flap endonuclease may be constitutively associated with the PCNA heterotrimer forming a scanning complex able to couple DNA synthesis and Okazaki fragment maturation. This is DNA ligase from Saccharolobus solfataricus (strain ATCC 35092 / DSM 1617 / JCM 11322 / P2) (Sulfolobus solfataricus).